A 631-amino-acid polypeptide reads, in one-letter code: 1-deoxy-D-xylulose-5-phosphate synthase (631 aa).

Thiamine diphosphate-binding positions include histidine 78 and 119 to 121 (AHS). Aspartate 150 is a Mg(2+) binding site. Thiamine diphosphate is bound by residues 151-152 (GA), asparagine 179, tyrosine 286, and glutamate 368. Position 179 (asparagine 179) interacts with Mg(2+).

Belongs to the transketolase family. DXPS subfamily. Homodimer. It depends on Mg(2+) as a cofactor. The cofactor is thiamine diphosphate.

It carries out the reaction D-glyceraldehyde 3-phosphate + pyruvate + H(+) = 1-deoxy-D-xylulose 5-phosphate + CO2. It participates in metabolic intermediate biosynthesis; 1-deoxy-D-xylulose 5-phosphate biosynthesis; 1-deoxy-D-xylulose 5-phosphate from D-glyceraldehyde 3-phosphate and pyruvate: step 1/1. Catalyzes the acyloin condensation reaction between C atoms 2 and 3 of pyruvate and glyceraldehyde 3-phosphate to yield 1-deoxy-D-xylulose-5-phosphate (DXP). The sequence is that of 1-deoxy-D-xylulose-5-phosphate synthase from Verminephrobacter eiseniae (strain EF01-2).